We begin with the raw amino-acid sequence, 205 residues long: Thymidylate kinase (205 aa).

10-17 (GIDGAGKT) lines the ATP pocket.

It belongs to the thymidylate kinase family.

The catalysed reaction is dTMP + ATP = dTDP + ADP. Functionally, phosphorylation of dTMP to form dTDP in both de novo and salvage pathways of dTTP synthesis. The sequence is that of Thymidylate kinase from Nitrosospira multiformis (strain ATCC 25196 / NCIMB 11849 / C 71).